A 320-amino-acid chain; its full sequence is GTP 3',8-cyclase (320 aa).

The Radical SAM core domain occupies 5–225 (QFDRKINYLR…IQLIKKDEKA (221 aa)). GTP is bound at residue Arg-14. [4Fe-4S] cluster is bound by residues Cys-21 and Cys-25. Tyr-27 lines the S-adenosyl-L-methionine pocket. Cys-28 contributes to the [4Fe-4S] cluster binding site. Arg-64 provides a ligand contact to GTP. Gly-68 serves as a coordination point for S-adenosyl-L-methionine. Thr-95 is a binding site for GTP. S-adenosyl-L-methionine is bound at residue Ser-119. Lys-155 provides a ligand contact to GTP. Met-189 is a binding site for S-adenosyl-L-methionine. Positions 248 and 251 each coordinate [4Fe-4S] cluster. 253-255 (RIR) lines the GTP pocket. Cys-265 contacts [4Fe-4S] cluster.

It belongs to the radical SAM superfamily. MoaA family. In terms of assembly, monomer and homodimer. [4Fe-4S] cluster is required as a cofactor.

It carries out the reaction GTP + AH2 + S-adenosyl-L-methionine = (8S)-3',8-cyclo-7,8-dihydroguanosine 5'-triphosphate + 5'-deoxyadenosine + L-methionine + A + H(+). It functions in the pathway cofactor biosynthesis; molybdopterin biosynthesis. Catalyzes the cyclization of GTP to (8S)-3',8-cyclo-7,8-dihydroguanosine 5'-triphosphate. This chain is GTP 3',8-cyclase, found in Campylobacter jejuni subsp. doylei (strain ATCC BAA-1458 / RM4099 / 269.97).